The chain runs to 365 residues: MNRPIVIAAGGTGGHFFPAEAVATVLAERGHDLVLMTDARHGRRETGLFKDRPQYVLDGAGVAGKGLSGKVHGVLALLRGMMEARRILASLDAAAVVGFGGYPSIPPLTASRLLPSAKRPQMVIHEGNAVLGQANAFLSRFSPLIATSYAKVARLPENARTTLTGMPVREGIEALFGHVYAPPEDRINLLVWGGSLGARVFSEIVPQALAALSEDFRKRLKVTQQIKADDLERVRAIYENAGIEVEAAPFFTNVPACLKNAHLVIGRAGGSSVAELAMAGLPSILVPLPIAASDEQGANGQALVDAGAAWMIRQPDFTAAALTALLTDLFSHPEKLENAAKAAHLCARPHAAAKVADLIESALRS.

UDP-N-acetyl-alpha-D-glucosamine contacts are provided by residues 12–14 (TGG), N128, R169, S195, and Q296.

Belongs to the glycosyltransferase 28 family. MurG subfamily.

It is found in the cell inner membrane. It catalyses the reaction di-trans,octa-cis-undecaprenyl diphospho-N-acetyl-alpha-D-muramoyl-L-alanyl-D-glutamyl-meso-2,6-diaminopimeloyl-D-alanyl-D-alanine + UDP-N-acetyl-alpha-D-glucosamine = di-trans,octa-cis-undecaprenyl diphospho-[N-acetyl-alpha-D-glucosaminyl-(1-&gt;4)]-N-acetyl-alpha-D-muramoyl-L-alanyl-D-glutamyl-meso-2,6-diaminopimeloyl-D-alanyl-D-alanine + UDP + H(+). The protein operates within cell wall biogenesis; peptidoglycan biosynthesis. In terms of biological role, cell wall formation. Catalyzes the transfer of a GlcNAc subunit on undecaprenyl-pyrophosphoryl-MurNAc-pentapeptide (lipid intermediate I) to form undecaprenyl-pyrophosphoryl-MurNAc-(pentapeptide)GlcNAc (lipid intermediate II). The polypeptide is UDP-N-acetylglucosamine--N-acetylmuramyl-(pentapeptide) pyrophosphoryl-undecaprenol N-acetylglucosamine transferase (Gluconobacter oxydans (strain 621H) (Gluconobacter suboxydans)).